The primary structure comprises 84 residues: NADH dehydrogenase [ubiquinone] 1 alpha subcomplex subunit 3 (84 aa).

Alanine 2 carries the N-acetylalanine modification. A helical transmembrane segment spans residues 19–39 (LVVSFSVWGLAIIMPMISPYT). The segment at 59–84 (DDGNMPDVPSHPQDPLGPSLDWLKNL) is disordered.

It belongs to the complex I NDUFA3 subunit family. In terms of assembly, complex I is composed of 45 different subunits.

It localises to the mitochondrion inner membrane. Its function is as follows. Accessory subunit of the mitochondrial membrane respiratory chain NADH dehydrogenase (Complex I), that is believed not to be involved in catalysis. Complex I functions in the transfer of electrons from NADH to the respiratory chain. The immediate electron acceptor for the enzyme is believed to be ubiquinone. The protein is NADH dehydrogenase [ubiquinone] 1 alpha subcomplex subunit 3 (Ndufa3) of Mus musculus (Mouse).